A 153-amino-acid chain; its full sequence is Ribosome maturation factor RimP (153 aa).

Belongs to the RimP family.

It localises to the cytoplasm. Functionally, required for maturation of 30S ribosomal subunits. The protein is Ribosome maturation factor RimP of Psychromonas ingrahamii (strain DSM 17664 / CCUG 51855 / 37).